Reading from the N-terminus, the 80-residue chain is Exodeoxyribonuclease 7 small subunit (80 aa).

It belongs to the XseB family. Heterooligomer composed of large and small subunits.

It localises to the cytoplasm. It carries out the reaction Exonucleolytic cleavage in either 5'- to 3'- or 3'- to 5'-direction to yield nucleoside 5'-phosphates.. In terms of biological role, bidirectionally degrades single-stranded DNA into large acid-insoluble oligonucleotides, which are then degraded further into small acid-soluble oligonucleotides. The chain is Exodeoxyribonuclease 7 small subunit from Edwardsiella ictaluri (strain 93-146).